The primary structure comprises 71 residues: Translation initiation factor IF-1 (71 aa).

The region spanning 1 to 71 is the S1-like domain; sequence MSKDDLIQFT…LTKGRVIHRH (71 aa).

Belongs to the IF-1 family. As to quaternary structure, component of the 30S ribosomal translation pre-initiation complex which assembles on the 30S ribosome in the order IF-2 and IF-3, IF-1 and N-formylmethionyl-tRNA(fMet); mRNA recruitment can occur at any time during PIC assembly.

Its subcellular location is the cytoplasm. In terms of biological role, one of the essential components for the initiation of protein synthesis. Stabilizes the binding of IF-2 and IF-3 on the 30S subunit to which N-formylmethionyl-tRNA(fMet) subsequently binds. Helps modulate mRNA selection, yielding the 30S pre-initiation complex (PIC). Upon addition of the 50S ribosomal subunit IF-1, IF-2 and IF-3 are released leaving the mature 70S translation initiation complex. The sequence is that of Translation initiation factor IF-1 from Rickettsia canadensis (strain McKiel).